A 343-amino-acid polypeptide reads, in one-letter code: S-adenosylmethionine:tRNA ribosyltransferase-isomerase (343 aa).

Belongs to the QueA family. Monomer.

The protein localises to the cytoplasm. The catalysed reaction is 7-aminomethyl-7-carbaguanosine(34) in tRNA + S-adenosyl-L-methionine = epoxyqueuosine(34) in tRNA + adenine + L-methionine + 2 H(+). Its pathway is tRNA modification; tRNA-queuosine biosynthesis. Transfers and isomerizes the ribose moiety from AdoMet to the 7-aminomethyl group of 7-deazaguanine (preQ1-tRNA) to give epoxyqueuosine (oQ-tRNA). The protein is S-adenosylmethionine:tRNA ribosyltransferase-isomerase of Dehalococcoides mccartyi (strain ATCC BAA-2100 / JCM 16839 / KCTC 5957 / BAV1).